Consider the following 120-residue polypeptide: uncharacterized protein (120 aa).

It to the N-terminal region of phage HK97/HK620 Gp37/hpaH.

This is an uncharacterized protein from Escherichia coli (strain K12).